Consider the following 464-residue polypeptide: CRISPR system endoribonuclease Csm6 (464 aa).

The segment at 1 to 190 (MEDLDALWER…LRILPNPHEA (190 aa)) is CARF domain. The tract at residues 191 to 464 (LAEVDALFAK…LSPEPVPLGF (274 aa)) is HEPN domain.

Belongs to the CRISPR-associated Csm6 family. Homodimer. The protein forms a twisted, head-to-head dimer; the composite ssRNase active site is formed at the dimer interface. It depends on Does not require a metal cofactor. as a cofactor.

Its activity is regulated as follows. Non-specific ssRNase activity is allosterically activated about 1000-fold by cyclic tetraadenylate (cA4), which probably binds to its CARF domain. In terms of biological role, CRISPR (clustered regularly interspaced short palindromic repeat) is an adaptive immune system that provides protection against mobile genetic elements (viruses, transposable elements and conjugative plasmids). CRISPR clusters contain spacers, sequences complementary to antecedent mobile elements, and target invading nucleic acids. CRISPR clusters are transcribed and processed into CRISPR RNA (crRNA). The type III-A Csm effector complex binds crRNA and acts as a crRNA-guided RNase, DNase and cyclic oligoadenylate synthase; binding of target RNA cognate to the crRNA is required for all activities. This protein is not part of the Csm effector complex. Its function is as follows. A single-strand-specific endoribonuclease (ssRNase) producing free 5'-OH. Activity is approximately 1000-fold stimulated by cyclic oligoadenylate (cOA); only cyclic tetraadenylate (cA4) stimulates the ssRNase activity while linear oligoadenylates do not activate the RNase. Another study showed stimulation by linear tetraadenylate at very high concentrations, but did not examine stimulation by cA4. The chain is CRISPR system endoribonuclease Csm6 from Thermus thermophilus (strain ATCC 27634 / DSM 579 / HB8).